The chain runs to 682 residues: Cyclic nucleotide-gated cation channel (682 aa).

Positions M1 to D41 are disordered. At M1–D136 the chain is on the cytoplasmic side. A compositionally biased stretch (basic and acidic residues) spans S20–E30. Residues I137–V157 form a helical membrane-spanning segment. At A158–N169 the chain is on the extracellular side. The helical transmembrane segment at F170–I190 threads the bilayer. The Cytoplasmic portion of the chain corresponds to R191 to Q218. A helical transmembrane segment spans residues F219 to V239. Residues P240–I272 are Extracellular-facing. Residues C273–I293 traverse the membrane as a helical segment. Residues S294 to K311 are Cytoplasmic-facing. Residues T312–G332 traverse the membrane as a helical segment. Residues E333–Y343 lie on the Extracellular side of the membrane. A helical membrane pass occupies residues V344–V364. Residues G365–T682 are Cytoplasmic-facing. 3',5'-cyclic AMP contacts are provided by residues L455–L577, E514, and R529. The segment at G649 to T682 is disordered. The segment covering T658–T672 has biased composition (basic and acidic residues).

It belongs to the cyclic nucleotide-gated cation channel (TC 1.A.1.5) family. As to expression, olfactory neurons.

The protein resides in the membrane. In terms of biological role, this cyclic nucleotide-gated channel is activated equally well by both cAMP and cGMP. In Ictalurus punctatus (Channel catfish), this protein is Cyclic nucleotide-gated cation channel.